A 354-amino-acid chain; its full sequence is AT-hook motif nuclear-localized protein 11 (354 aa).

Disordered stretches follow at residues 1–158 (MDRR…MMPS) and 290–354 (KREE…LMRG). Low complexity-rich tracts occupy residues 46 to 55 (NSISPFGSNP) and 75 to 96 (VDSS…PPSG). Residues 101-109 (KRKRGRPRK) carry the Bipartite nuclear localization signal motif. The segment at residues 101 to 113 (KRKRGRPRKYGQD) is a DNA-binding region (a.T hook 1). Positions 122 to 133 (SPSISNVSPNSN) are enriched in low complexity. Positions 134-146 (KRGRGRPPGSGKK) form a DNA-binding region, a.T hook 2. The PPC domain occupies 159-302 (STGMSFTPHV…ETSEDVQDTD (144 aa)). Positions 294 to 303 (TSEDVQDTDA) are enriched in acidic residues. Over residues 304–327 (LENNNDNTAATSPPVPQQSQNIVQ) the composition is skewed to polar residues. Positions 340-354 (MDMHHPHMDIDLMRG) are enriched in basic and acidic residues.

It localises to the nucleus. Its function is as follows. Transcription factor that specifically binds AT-rich DNA sequences related to the nuclear matrix attachment regions (MARs). The protein is AT-hook motif nuclear-localized protein 11 of Arabidopsis thaliana (Mouse-ear cress).